Consider the following 249-residue polypeptide: EID1-like F-box protein 2 (249 aa).

One can recognise an F-box domain in the interval 16 to 68; sequence HCTKGHLSEEVLFLMVQHLNWNPNVIATLSCVCKWFDDLAKRLLWKEFCRARA.

This Arabidopsis thaliana (Mouse-ear cress) protein is EID1-like F-box protein 2 (EDL2).